Reading from the N-terminus, the 456-residue chain is MSSQIKQVFARQILDSRGNPTVEVDVVLESGAFGRAAVPSGASTGIREALELRDGNKALFLGKSVYKAVENVNTKIAQAVKGLDALDQRLIDKTMIELDGSENKKNLGANAILGVSLATARAAASHLRKPFYRYLMDVKEYLMPVPMMNVINGGSHADNNVDMQEFMIVPAGFDTFSEALRCGTEVFHTLKKVLIADGYSVAGVGDEGGYAPDLPSNEAAIEAILKAVKEAGYEPGKHVFIALDPASSEFYKDGKYELKSENKSLTTEEMIDYYAAWVEKYPIVSIEDGLAEEDWAGWKLLTEKLGNKVQLVGDDLFVTNPSILAKGIEKGIANSILIKLNQIGTLTETFEAMAMAGQAGYTCVVSHRSGETSDTIIADLAVATCSGQIKTGSLSRSDRIAKYNQLLRIEEELGENAIYPGIKAFVFNSDEEVEEVVQEIIVEDSEAEKVVVQVEE.

Gln164 is a binding site for (2R)-2-phosphoglycerate. Residue Glu207 is the Proton donor of the active site. 3 residues coordinate Mg(2+): Asp244, Glu287, and Asp314. Residues Lys339, Arg368, Ser369, and Lys390 each contribute to the (2R)-2-phosphoglycerate site. The active-site Proton acceptor is the Lys339.

This sequence belongs to the enolase family. In terms of assembly, component of the RNA degradosome, a multiprotein complex involved in RNA processing and mRNA degradation. Requires Mg(2+) as cofactor.

It is found in the cytoplasm. Its subcellular location is the secreted. The protein resides in the cell surface. The enzyme catalyses (2R)-2-phosphoglycerate = phosphoenolpyruvate + H2O. The protein operates within carbohydrate degradation; glycolysis; pyruvate from D-glyceraldehyde 3-phosphate: step 4/5. In terms of biological role, catalyzes the reversible conversion of 2-phosphoglycerate (2-PG) into phosphoenolpyruvate (PEP). It is essential for the degradation of carbohydrates via glycolysis. This chain is Enolase, found in Francisella tularensis subsp. holarctica (strain OSU18).